The chain runs to 435 residues: MTTFSPREIVSELDRYIIGQHDAKRAVAIALRNRWRRQQLDPSLRDEVMPKNILMIGPTGVGKTEISRRLAKLAGAPFIKVEATKFTEVGYVGRDVEQIIRDLVEVGIGLVREKKRAEVQAKAHVSAEERVLDALVGTTASPATRENFRKKLRDGELDDKEIDIEVADAGSGMGGFEIPGMPGANIGVLNLSEMFGKAMGGRTKKVRTTVKASYSDLIRDESDKLIDNEVIQREAVRSTENDGIVFLDEIDKIAARDGGMGAGVSREGVQRDLLPLVEGTTVSTKYGPVKTDHILFIASGAFHVSKPSDLLPELQGRLPIRVELRPLNKDDFRRILTETEASLIRQYRALMETESLSLEFTDDAIDALADVAVHLNSSVENIGARRLQTVMERVLDDISYNAPDRGGTAVTIDAAYVREHVGDLAQNTDLSRFIL.

ATP is bound by residues Ile-18, 60 to 65 (GVGKTE), Asp-248, Glu-313, and Arg-385.

This sequence belongs to the ClpX chaperone family. HslU subfamily. In terms of assembly, a double ring-shaped homohexamer of HslV is capped on each side by a ring-shaped HslU homohexamer. The assembly of the HslU/HslV complex is dependent on binding of ATP.

Its subcellular location is the cytoplasm. ATPase subunit of a proteasome-like degradation complex; this subunit has chaperone activity. The binding of ATP and its subsequent hydrolysis by HslU are essential for unfolding of protein substrates subsequently hydrolyzed by HslV. HslU recognizes the N-terminal part of its protein substrates and unfolds these before they are guided to HslV for hydrolysis. The sequence is that of ATP-dependent protease ATPase subunit HslU from Rhizobium johnstonii (strain DSM 114642 / LMG 32736 / 3841) (Rhizobium leguminosarum bv. viciae).